The primary structure comprises 227 residues: uncharacterized protein (227 aa).

The N-terminal stretch at 1–21 is a signal peptide; it reads MELKKIAVGLTALLGMSVANA.

This is an uncharacterized protein from Haemophilus influenzae (strain ATCC 51907 / DSM 11121 / KW20 / Rd).